The following is a 97-amino-acid chain: MSNISKETVEKVANLAKLEVSETEATAFAGQLGKIIELVEQLNTLDTNNVEPTSHAIDVSNVLREDVATKGLDRKEVLKNAPDQQDGMFKVPTIMEQ.

It belongs to the GatC family. As to quaternary structure, heterotrimer of A, B and C subunits.

The catalysed reaction is L-glutamyl-tRNA(Gln) + L-glutamine + ATP + H2O = L-glutaminyl-tRNA(Gln) + L-glutamate + ADP + phosphate + H(+). The enzyme catalyses L-aspartyl-tRNA(Asn) + L-glutamine + ATP + H2O = L-asparaginyl-tRNA(Asn) + L-glutamate + ADP + phosphate + 2 H(+). In terms of biological role, allows the formation of correctly charged Asn-tRNA(Asn) or Gln-tRNA(Gln) through the transamidation of misacylated Asp-tRNA(Asn) or Glu-tRNA(Gln) in organisms which lack either or both of asparaginyl-tRNA or glutaminyl-tRNA synthetases. The reaction takes place in the presence of glutamine and ATP through an activated phospho-Asp-tRNA(Asn) or phospho-Glu-tRNA(Gln). The polypeptide is Aspartyl/glutamyl-tRNA(Asn/Gln) amidotransferase subunit C (Listeria innocua serovar 6a (strain ATCC BAA-680 / CLIP 11262)).